A 711-amino-acid chain; its full sequence is Hydroperoxide isomerase ALOXE3 (711 aa).

The PLAT domain occupies 2–119 (AVYRLCVTTG…TVELRPGTAR (118 aa)). A Lipoxygenase domain is found at 120–711 (TICQDSLPLL…PPLIENSVSI (592 aa)). Positions 408, 413, 588, 592, and 711 each coordinate Fe cation.

This sequence belongs to the lipoxygenase family. It depends on Fe cation as a cofactor. In terms of tissue distribution, predominantly expressed in skin.

The protein resides in the cytoplasm. The enzyme catalyses a hydroperoxyeicosatetraenoate = a hydroxy-epoxy-eicosatetraenoate. It carries out the reaction (12R)-hydroperoxy-(5Z,8Z,10E,14Z)-eicosatetraenoate = (8R)-hydroxy-(11R,12R)-epoxy-(5Z,9E,14Z)-eicosatrienoate. The catalysed reaction is (12S)-hydroperoxy-(5Z,8Z,10E,14Z)-eicosatetraenoate = (8R)-hydroxy-(11S,12S)-epoxy-(5Z,9E,14Z)-eicosatrienoate. It catalyses the reaction (12S)-hydroperoxy-(5Z,8Z,10E,14Z)-eicosatetraenoate = (10R)-hydroxy-(11S,12S)-epoxy-(5Z,8Z,14Z)-eicosatrienoate. The enzyme catalyses (15S)-hydroperoxy-(5Z,8Z,11Z,13E)-eicosatetraenoate = (13R)-hydroxy-(14S,15S)-epoxy-(5Z,8Z,11Z)-eicosatrienoate. It carries out the reaction (5S)-hydroperoxy-(6E,8Z,11Z,14Z)-eicosatetraenoate = 7R-hydroxy-5S,6S-epoxy-(8Z,11Z,14Z)-eicosatrienoate. The catalysed reaction is (13S)-hydroperoxy-(9Z,11E)-octadecadienoate = 11-hydroxy-(12S,13S)-epoxy-(9Z)-octadecenoate. It catalyses the reaction N-[omega-(9R)-hydroperoxy-(10E,12Z)-octadecadienoyloxy]acyl-beta-D-glucosyl-(1&lt;-&gt;1)-octadecasphing-4E-enine = a N-[omega-(9R,10R)-epoxy-(13R)-hydroxy-(11E)-octadecenoyloxy]acyl-beta-D-glucosyl-(1&lt;-&gt;1)-sphing-4E-enine. The enzyme catalyses a N-[omega-(9R)-hydroperoxy-(10E,12Z)-octadecadienoyloxy]-acylsphin-4E-enine = a N-[omega-(9R,10R)-epoxy-(13R)-hydroxy-(11E)-octadecenoyloxy]-acylsphing-4E-enine. It carries out the reaction a hydroperoxyeicosatetraenoate = an oxoeicosatetraenoate + H2O. The catalysed reaction is (12R)-hydroperoxy-(5Z,8Z,10E,14Z)-eicosatetraenoate = 12-oxo-(5Z,8Z,10E,14Z)-eicosatetraenoate + H2O. It catalyses the reaction (12S)-hydroperoxy-(5Z,8Z,10E,14Z)-eicosatetraenoate = 12-oxo-(5Z,8Z,10E,14Z)-eicosatetraenoate + H2O. The enzyme catalyses (15S)-hydroperoxy-(5Z,8Z,11Z,13E)-eicosatetraenoate = 15-oxo-(5Z,8Z,11Z,13E)-eicosatetraenoate + H2O. It carries out the reaction (13S)-hydroperoxy-(9Z,11E)-octadecadienoate = 13-oxo-(9Z,11E)-octadecadienoate + H2O. The catalysed reaction is (8S)-hydroperoxy-(5Z,9E,11Z,14Z)-eicosatetraenoate = (10R)-hydroxy-(8S,9S)-epoxy-(5Z,11Z,14Z)-eicosatrienoate. It catalyses the reaction (8R)-hydroperoxy-(5Z,9E,11Z,14Z)-eicosatetraenoate = 8-oxo-(5Z,9E,11Z,14Z)-eicosatetraenoate + H2O. The enzyme catalyses (8S)-hydroperoxy-(5Z,9E,11Z,14Z)-eicosatetraenoate = 8-oxo-(5Z,9E,11Z,14Z)-eicosatetraenoate + H2O. Its pathway is lipid metabolism; hydroperoxy eicosatetraenoic acid biosynthesis. The protein operates within lipid metabolism; sphingolipid metabolism. Lipoxygenase activity is activated by 13(S)-HPODE leading to an active free ferric enzyme. The lipoxygenase and hydroperoxide isomerase activities are in competition and are reciprocally regulated by oxygen. The oxygen reacts with an epoxyallylic radical intermediate leading to an epoxyallylic peroxyl radical, which, due to its limited reactivity within the enzyme active site, it dissociates and leaves the enzyme in the activated free ferric state. In terms of biological role, non-heme iron-containing lipoxygenase which is atypical in that it displays a prominent hydroperoxide isomerase activity and a reduced lipoxygenases activity. The hydroperoxide isomerase activity catalyzes the isomerization of hydroperoxides, derived from arachidonic and linoleic acid by ALOX12B, into hepoxilin-type epoxyalcohols and ketones. In presence of oxygen, oxygenates polyunsaturated fatty acids, including arachidonic acid, to produce fatty acid hydroperoxides. In the skin, acts downstream of ALOX12B on the linoleate moiety of esterified omega-hydroxyacyl-sphingosine (EOS) ceramides to produce an epoxy-ketone derivative, a crucial step in the conjugation of omega-hydroxyceramide to membrane proteins. Therefore plays a crucial role in the synthesis of corneocytes lipid envelope and the establishment of the skin barrier to water loss. In parallel, it may have a signaling function in barrier formation through the production of hepoxilins metabolites. Also plays a role in adipocyte differentiation through hepoxilin A3 and hepoxilin B3 production which in turn activate PPARG. Through the production of hepoxilins in the spinal cord, it may regulate inflammatory tactile allodynia. This chain is Hydroperoxide isomerase ALOXE3, found in Homo sapiens (Human).